Here is a 373-residue protein sequence, read N- to C-terminus: Queuine tRNA-ribosyltransferase (373 aa).

Asp-90 (proton acceptor) is an active-site residue. Substrate-binding positions include 90 to 94 (DSGGF), Asp-144, Gln-193, and Gly-220. The RNA binding stretch occupies residues 251–257 (GVGTPED). Asp-270 (nucleophile) is an active-site residue. The interval 275–279 (TRNAR) is RNA binding; important for wobble base 34 recognition. Residues Cys-308, Cys-310, Cys-313, and His-339 each contribute to the Zn(2+) site.

It belongs to the queuine tRNA-ribosyltransferase family. In terms of assembly, homodimer. Within each dimer, one monomer is responsible for RNA recognition and catalysis, while the other monomer binds to the replacement base PreQ1. Zn(2+) serves as cofactor.

It catalyses the reaction 7-aminomethyl-7-carbaguanine + guanosine(34) in tRNA = 7-aminomethyl-7-carbaguanosine(34) in tRNA + guanine. It participates in tRNA modification; tRNA-queuosine biosynthesis. Functionally, catalyzes the base-exchange of a guanine (G) residue with the queuine precursor 7-aminomethyl-7-deazaguanine (PreQ1) at position 34 (anticodon wobble position) in tRNAs with GU(N) anticodons (tRNA-Asp, -Asn, -His and -Tyr). Catalysis occurs through a double-displacement mechanism. The nucleophile active site attacks the C1' of nucleotide 34 to detach the guanine base from the RNA, forming a covalent enzyme-RNA intermediate. The proton acceptor active site deprotonates the incoming PreQ1, allowing a nucleophilic attack on the C1' of the ribose to form the product. After dissociation, two additional enzymatic reactions on the tRNA convert PreQ1 to queuine (Q), resulting in the hypermodified nucleoside queuosine (7-(((4,5-cis-dihydroxy-2-cyclopenten-1-yl)amino)methyl)-7-deazaguanosine). The chain is Queuine tRNA-ribosyltransferase from Campylobacter lari (strain RM2100 / D67 / ATCC BAA-1060).